The chain runs to 422 residues: 26S proteasome non-ATPase regulatory subunit 11 (422 aa).

N-acetylalanine is present on A2. 2 positions are modified to phosphoserine: S14 and S23. In terms of domain architecture, PCI spans 224–392; sequence DWKTAYSYFY…GVLIIFDEPP (169 aa). Residue K274 forms a Glycyl lysine isopeptide (Lys-Gly) (interchain with G-Cter in SUMO2) linkage.

This sequence belongs to the proteasome subunit S9 family. Component of the 19S proteasome regulatory particle complex. The 26S proteasome consists of a 20S core particle (CP) and two 19S regulatory subunits (RP). The regulatory particle is made of a lid composed of 9 subunits including PSMD11, a base containing 6 ATPases and few additional components.

In terms of biological role, component of the 26S proteasome, a multiprotein complex involved in the ATP-dependent degradation of ubiquitinated proteins. This complex plays a key role in the maintenance of protein homeostasis by removing misfolded or damaged proteins, which could impair cellular functions, and by removing proteins whose functions are no longer required. Therefore, the proteasome participates in numerous cellular processes, including cell cycle progression, apoptosis, or DNA damage repair. In the complex, PSMD11 is required for proteasome assembly. Plays a key role in increased proteasome activity in embryonic stem cells (ESCs): its high expression in ESCs promotes enhanced assembly of the 26S proteasome, followed by higher proteasome activity. The sequence is that of 26S proteasome non-ATPase regulatory subunit 11 (Psmd11) from Mus musculus (Mouse).